Here is a 442-residue protein sequence, read N- to C-terminus: Proline--tRNA ligase (442 aa).

It belongs to the class-II aminoacyl-tRNA synthetase family. ProS type 2 subfamily. As to quaternary structure, homodimer.

It localises to the cytoplasm. The catalysed reaction is tRNA(Pro) + L-proline + ATP = L-prolyl-tRNA(Pro) + AMP + diphosphate. Catalyzes the attachment of proline to tRNA(Pro) in a two-step reaction: proline is first activated by ATP to form Pro-AMP and then transferred to the acceptor end of tRNA(Pro). The polypeptide is Proline--tRNA ligase (Brucella ovis (strain ATCC 25840 / 63/290 / NCTC 10512)).